The sequence spans 422 residues: Phytoene synthase 1, chloroplastic (422 aa).

The transit peptide at 1-70 directs the protein to the chloroplast; the sequence is MSSSVAVLWV…NRSRRIGVVS (70 aa).

This sequence belongs to the phytoene/squalene synthase family. Monomer. Interacts with OR. Interacts with ORLIKE.

It is found in the plastid. The protein resides in the chloroplast membrane. The enzyme catalyses 2 (2E,6E,10E)-geranylgeranyl diphosphate = 15-cis-phytoene + 2 diphosphate. It functions in the pathway carotenoid biosynthesis; phytoene biosynthesis; all-trans-phytoene from geranylgeranyl diphosphate: step 1/1. Its function is as follows. Catalyzes the reaction from prephytoene diphosphate to phytoene. The polypeptide is Phytoene synthase 1, chloroplastic (Arabidopsis thaliana (Mouse-ear cress)).